The sequence spans 273 residues: Glutamate racemase (273 aa).

Substrate contacts are provided by residues 19 to 20 and 51 to 52; these read DS and YG. C83 functions as the Proton donor/acceptor in the catalytic mechanism. Residue 84–85 participates in substrate binding; sequence NT. C198 (proton donor/acceptor) is an active-site residue. 199–200 is a binding site for substrate; it reads TH.

This sequence belongs to the aspartate/glutamate racemases family.

The catalysed reaction is L-glutamate = D-glutamate. The protein operates within cell wall biogenesis; peptidoglycan biosynthesis. Functionally, provides the (R)-glutamate required for cell wall biosynthesis. The polypeptide is Glutamate racemase (Agrobacterium fabrum (strain C58 / ATCC 33970) (Agrobacterium tumefaciens (strain C58))).